We begin with the raw amino-acid sequence, 177 residues long: Adenine phosphoribosyltransferase (177 aa).

It belongs to the purine/pyrimidine phosphoribosyltransferase family. In terms of assembly, homodimer.

It is found in the cytoplasm. It catalyses the reaction AMP + diphosphate = 5-phospho-alpha-D-ribose 1-diphosphate + adenine. Its pathway is purine metabolism; AMP biosynthesis via salvage pathway; AMP from adenine: step 1/1. Functionally, catalyzes a salvage reaction resulting in the formation of AMP, that is energically less costly than de novo synthesis. This chain is Adenine phosphoribosyltransferase, found in Pelodictyon phaeoclathratiforme (strain DSM 5477 / BU-1).